The sequence spans 107 residues: Nucleoid-associated protein RC1337 (107 aa).

This sequence belongs to the YbaB/EbfC family. As to quaternary structure, homodimer.

Its subcellular location is the cytoplasm. It is found in the nucleoid. Binds to DNA and alters its conformation. May be involved in regulation of gene expression, nucleoid organization and DNA protection. The polypeptide is Nucleoid-associated protein RC1337 (Rickettsia conorii (strain ATCC VR-613 / Malish 7)).